The following is a 1027-amino-acid chain: Error-prone DNA polymerase (1027 aa).

This sequence belongs to the DNA polymerase type-C family. DnaE2 subfamily.

It is found in the cytoplasm. The catalysed reaction is DNA(n) + a 2'-deoxyribonucleoside 5'-triphosphate = DNA(n+1) + diphosphate. Its function is as follows. DNA polymerase involved in damage-induced mutagenesis and translesion synthesis (TLS). It is not the major replicative DNA polymerase. The polypeptide is Error-prone DNA polymerase (Dechloromonas aromatica (strain RCB)).